Reading from the N-terminus, the 427-residue chain is 3-phosphoshikimate 1-carboxyvinyltransferase (427 aa).

Positions 22, 23, and 27 each coordinate 3-phosphoshikimate. A phosphoenolpyruvate-binding site is contributed by lysine 22. Phosphoenolpyruvate-binding residues include glycine 96 and arginine 124. Residues serine 169, serine 170, glutamine 171, serine 197, aspartate 313, asparagine 336, and lysine 340 each contribute to the 3-phosphoshikimate site. Glutamine 171 contacts phosphoenolpyruvate. The Proton acceptor role is filled by aspartate 313. Phosphoenolpyruvate contacts are provided by arginine 344, arginine 386, and lysine 411.

The protein belongs to the EPSP synthase family. In terms of assembly, monomer.

The protein localises to the cytoplasm. The enzyme catalyses 3-phosphoshikimate + phosphoenolpyruvate = 5-O-(1-carboxyvinyl)-3-phosphoshikimate + phosphate. The protein operates within metabolic intermediate biosynthesis; chorismate biosynthesis; chorismate from D-erythrose 4-phosphate and phosphoenolpyruvate: step 6/7. Catalyzes the transfer of the enolpyruvyl moiety of phosphoenolpyruvate (PEP) to the 5-hydroxyl of shikimate-3-phosphate (S3P) to produce enolpyruvyl shikimate-3-phosphate and inorganic phosphate. The polypeptide is 3-phosphoshikimate 1-carboxyvinyltransferase (Shigella sonnei).